The primary structure comprises 546 residues: MAAKDVVFGDSARSKMVEGVNILANAVKVTLGPKGRNVVLERSFGGPTVTKDGVSVAKEIELKDKLQNMGAQMVKEVASKTSDNAGDGTTTATVLAQSIVREGMKYVASGMNPMDLKRGIDKAVAAAVEELKKISKPCTTNKEIAQVGSISANSDTSIGDRIAEAMDKVGKEGVITVEDGKSLADELDVVEGMQFDRGYLSPYFINNPEKQVAVLDNPFVLLHDKKVSNIRDLLPVLEQVAKAGRPLLIIAEDIEGEALATLVVNNIRGILKTVAVKAPGFGDRRKAMLEDIAILTGGQVIAEETGLTLEKATLAELGQAKRIEVGKENTTIIDGAGEAVNIEARVKQVRAQIEEATSDYDREKLQERVAKLAGGVAVIKVGAATEVEMKEKKARVEDALHATRAAVEEGIVAGGGVALIRARTAIAALTGANADQNAGIKIVLRAMEEPLRQIVTNGGEEASVVVAAVAAGTGNYGYNAATGEYVDMVEAGVVDPTKVTRTALQNAASVAGLLLTTDAAVAELPKEDAPMPGGMPGGMGGMGMDM.

ATP-binding positions include 30–33 (TLGP), Lys-51, 87–91 (DGTTT), Gly-415, 479–481 (NAA), and Asp-495. Residues 526 to 546 (KEDAPMPGGMPGGMGGMGMDM) form a disordered region. Over residues 534 to 546 (GMPGGMGGMGMDM) the composition is skewed to gly residues.

Belongs to the chaperonin (HSP60) family. As to quaternary structure, forms a cylinder of 14 subunits composed of two heptameric rings stacked back-to-back. Interacts with the co-chaperonin GroES.

Its subcellular location is the cytoplasm. The catalysed reaction is ATP + H2O + a folded polypeptide = ADP + phosphate + an unfolded polypeptide.. Functionally, together with its co-chaperonin GroES, plays an essential role in assisting protein folding. The GroEL-GroES system forms a nano-cage that allows encapsulation of the non-native substrate proteins and provides a physical environment optimized to promote and accelerate protein folding. In Burkholderia lata (strain ATCC 17760 / DSM 23089 / LMG 22485 / NCIMB 9086 / R18194 / 383), this protein is Chaperonin GroEL 2.